Reading from the N-terminus, the 303-residue chain is Acetaldehyde dehydrogenase 1 (303 aa).

Cys130 functions as the Acyl-thioester intermediate in the catalytic mechanism. Residues 161 to 169 (SVGPGTRKN) and Asn272 each bind NAD(+).

This sequence belongs to the acetaldehyde dehydrogenase family.

The enzyme catalyses acetaldehyde + NAD(+) + CoA = acetyl-CoA + NADH + H(+). This Cupriavidus metallidurans (strain ATCC 43123 / DSM 2839 / NBRC 102507 / CH34) (Ralstonia metallidurans) protein is Acetaldehyde dehydrogenase 1.